Consider the following 332-residue polypeptide: Ketol-acid reductoisomerase (NADP(+)) (332 aa).

The 182-residue stretch at 1-182 (MAQVWKDAEI…GSARAGLIKT (182 aa)) folds into the KARI N-terminal Rossmann domain. NADP(+) is bound by residues 25 to 28 (YGIQ), Lys48, Ser53, and 83 to 86 (DMIQ). The active site involves His108. Gly134 is an NADP(+) binding site. The KARI C-terminal knotted domain maps to 183–329 (TFKEEVETDW…RKMRKMMWPD (147 aa)). Mg(2+) contacts are provided by Asp191, Glu195, Glu227, and Glu231. Residue Ser252 coordinates substrate.

It belongs to the ketol-acid reductoisomerase family. Requires Mg(2+) as cofactor.

It catalyses the reaction (2R)-2,3-dihydroxy-3-methylbutanoate + NADP(+) = (2S)-2-acetolactate + NADPH + H(+). It carries out the reaction (2R,3R)-2,3-dihydroxy-3-methylpentanoate + NADP(+) = (S)-2-ethyl-2-hydroxy-3-oxobutanoate + NADPH + H(+). The protein operates within amino-acid biosynthesis; L-isoleucine biosynthesis; L-isoleucine from 2-oxobutanoate: step 2/4. It functions in the pathway amino-acid biosynthesis; L-valine biosynthesis; L-valine from pyruvate: step 2/4. Its function is as follows. Involved in the biosynthesis of branched-chain amino acids (BCAA). Catalyzes an alkyl-migration followed by a ketol-acid reduction of (S)-2-acetolactate (S2AL) to yield (R)-2,3-dihydroxy-isovalerate. In the isomerase reaction, S2AL is rearranged via a Mg-dependent methyl migration to produce 3-hydroxy-3-methyl-2-ketobutyrate (HMKB). In the reductase reaction, this 2-ketoacid undergoes a metal-dependent reduction by NADPH to yield (R)-2,3-dihydroxy-isovalerate. This Cenarchaeum symbiosum (strain A) protein is Ketol-acid reductoisomerase (NADP(+)).